A 115-amino-acid polypeptide reads, in one-letter code: U3-lycotoxin-Ls1h (115 aa).

The N-terminal stretch at 1–20 (MKFVLLFGVFLVTLFSYSSA) is a signal peptide. The propeptide occupies 21–44 (EMLDDFDQADEDELLSLIEKEEAR). 4 cysteine pairs are disulfide-bonded: cysteine 48–cysteine 63, cysteine 55–cysteine 72, cysteine 62–cysteine 87, and cysteine 74–cysteine 85.

Belongs to the neurotoxin 19 (CSTX) family. 01 subfamily. In terms of tissue distribution, expressed by the venom gland.

It localises to the secreted. The polypeptide is U3-lycotoxin-Ls1h (Lycosa singoriensis (Wolf spider)).